A 158-amino-acid chain; its full sequence is MVEKVPMTQGGFVKLQEELRFRQQEERPRIIEAIAEARAHGDLSENAEYHAAKEAQSHNEGRITELEDLTARAEVIDLSKMSGSKIKFGATVKLIDEDSDEEKTYQIVGDQEADVKAGRISISSPIARALIGKEVGDSIEVNAPGGAKGYEILAVQWG.

This sequence belongs to the GreA/GreB family.

Necessary for efficient RNA polymerase transcription elongation past template-encoded arresting sites. The arresting sites in DNA have the property of trapping a certain fraction of elongating RNA polymerases that pass through, resulting in locked ternary complexes. Cleavage of the nascent transcript by cleavage factors such as GreA or GreB allows the resumption of elongation from the new 3'terminus. GreA releases sequences of 2 to 3 nucleotides. The protein is Transcription elongation factor GreA of Agrobacterium fabrum (strain C58 / ATCC 33970) (Agrobacterium tumefaciens (strain C58)).